Consider the following 384-residue polypeptide: Terpene cyclase ascI (384 aa).

Positions 1-25 are cleaved as a signal peptide; that stretch reads MPQLAGKLILAGLIPLGAWVLHGFA. The helical transmembrane segment at 82–102 threads the bilayer; it reads LSLHAFMFAGQGVPLLVLNML. Residue N109 is glycosylated (N-linked (GlcNAc...) asparagine). The next 4 membrane-spanning stretches (helical) occupy residues 119-139, 164-184, 194-214, and 235-255; these read VFGI…YLFL, AVGF…SLPH, VLSV…AYFA, and GAVY…TFAI. N258 carries N-linked (GlcNAc...) asparagine glycosylation. A run of 2 helical transmembrane segments spans residues 291–311 and 330–350; these read WFLQ…AIGI and IALR…ALSL. Residue N372 is glycosylated (N-linked (GlcNAc...) asparagine).

Belongs to the membrane-bound ascI terpene cyclase family.

It localises to the membrane. It carries out the reaction 16-hydroxy-ilicicolin A epoxide = ascofuranol. It participates in secondary metabolite biosynthesis; terpenoid biosynthesis. Its function is as follows. Epoxide hydrolase; part of the asc-2 gene cluster that mediates the biosynthesis of ascofuranone, a strong inhibitor of cyanide-insensitive alternative oxidases and a promising drug candidate against African trypanosomiasis. The first step in the pathway is performed by the non-reducing polyketide synthase ascC that produces orsellinic acid by condensing acetyl-CoA with 3 malonyl-CoA units. Orsellinic acid is then prenylated by the prenyltransferase ascA to yield ilicicolinic acid B. Ilicicolinic acid B is further reduced to ilicicolin B by the reductase ascB. The halogenase ascD then chlorinates ilicicolin B to produce ilicicolin A which is converted to ilicicolin A epoxide by the cytochrome P450 monooxygenase ascE that catalyzes stereoselective epoxidation of the terminal double bond of the prenyl group. Ilicicolin A epoxide is the last common precursor for the biosynthesis of ascofuranone and ascochlorin. The terpene cyclase ascF produces a monocyclic terpene, and the cyclization reaction is proposed to be initiated by protonation of the terminal epoxide of ilicicolin A epoxide to generate a monocyclic tertiarycation, which is followed by a series of hydride and methyl shifts with abstraction of proton, leading to the formation of the (14S,15R,19R)-trimethylcyclohexanone ring structure of ilicicolin C, which is finally reduced to ascochlorin by the dehydrogenase ascG. On the other hand, ilicicolin A epoxide is hydroxylated by the cytochrome P450 monooxygenase ascH, and the resultant product is cyclized by the terpene cyclase ascI to ascofuranol via protonation-initiated epoxide ring opening, which facilitates the 6-endo-tet cyclization to form the tetrahy-drofuran ring. Finally, ascofuranol is oxidized into ascofuranone by ascJ. The protein is Terpene cyclase ascI of Acremonium egyptiacum (Oospora egyptiaca).